The primary structure comprises 520 residues: Gamma aminobutyrate transaminase 3, chloroplastic (520 aa).

Residues 1-44 constitute a chloroplast transit peptide; that stretch reads MAKITSLIGSGIVAATNQVGPHVKHIPAVGNLQKQIVSDQIQVR. 172-173 contributes to the pyridoxal 5'-phosphate binding site; that stretch reads GS. Tyr-205 contributes to the substrate binding site. Asp-312 serves as a coordination point for pyridoxal 5'-phosphate. Lys-341 is a substrate binding site. Lys-341 carries the N6-(pyridoxal phosphate)lysine modification.

It belongs to the class-III pyridoxal-phosphate-dependent aminotransferase family. As to expression, expressed in leaves, roots, stems, flowers and fruits.

The protein resides in the plastid. Its subcellular location is the chloroplast. The catalysed reaction is 4-aminobutanoate + pyruvate = succinate semialdehyde + L-alanine. It catalyses the reaction 4-aminobutanoate + glyoxylate = succinate semialdehyde + glycine. Transaminase that degrades gamma-amino butyric acid (GABA) and uses pyruvate or glyoxylate as amino-group acceptor. Cannot use beta-alanine, ornithine, acetylornithine, serine, glycine, asparagine, glutamine, glutamate, valine, leucine, isoleucine, methionine, phenylalanine, histidine, lysine, arginine, aspartate, threonine, tyrosine, tryptophan, proline, or cysteine as amino donors. The protein is Gamma aminobutyrate transaminase 3, chloroplastic (GABA-TP3) of Solanum lycopersicum (Tomato).